A 223-amino-acid chain; its full sequence is Glutathione S-transferase A2 (223 aa).

Ala2 is subject to N-acetylalanine. Residues 3-83 (GKPKLHYFNG…YIATKYNLYG (81 aa)) enclose the GST N-terminal domain. Lys4 is modified (N6-succinyllysine). Glutathione contacts are provided by residues Tyr9, Arg45, 54 to 55 (QV), and 67 to 68 (QT). The 124-residue stretch at 85–208 (DMKERALIDM…QPGSQRKPPM (124 aa)) folds into the GST C-terminal domain.

Belongs to the GST superfamily. Alpha family. Homodimer. As to expression, expressed in corpus luteum, adrenal gland, testis, liver, lung, thyroid and kidney.

The protein resides in the cytoplasm. It catalyses the reaction RX + glutathione = an S-substituted glutathione + a halide anion + H(+). Functionally, conjugation of reduced glutathione to a wide number of exogenous and endogenous hydrophobic electrophiles. This Bos taurus (Bovine) protein is Glutathione S-transferase A2 (GSTA2).